Here is a 199-residue protein sequence, read N- to C-terminus: Insertion sequence IS21-like putative ATP-binding protein (199 aa).

114-121 (GDSGTGKT) contributes to the ATP binding site.

The protein belongs to the IS21/IS1162 putative ATP-binding protein family.

This Bacteroides fragilis (strain YCH46) protein is Insertion sequence IS21-like putative ATP-binding protein (tnpB).